The primary structure comprises 452 residues: Digeranylgeranylglycerophospholipid reductase (452 aa).

FAD-binding positions include 15 to 16 (FA), 35 to 36 (DS), and 45 to 50 (KPCGDA). His-55 provides a ligand contact to a 2,3-bis-O-phytanyl-sn-glycerol 1-phospholipid. Residues Ala-122 and Asp-288 each contribute to the FAD site. His-297 contacts a 2,3-bis-O-phytanyl-sn-glycerol 1-phospholipid. 300–301 (GK) is an FAD binding site. Cys-310 and Cys-335 form a disulfide bridge. Tyr-340 provides a ligand contact to a 2,3-bis-O-phytanyl-sn-glycerol 1-phospholipid.

Belongs to the geranylgeranyl reductase family. Monomer. FAD is required as a cofactor.

The enzyme catalyses a 2,3-bis-O-phytanyl-sn-glycerol 1-phospholipid + 8 A = a 2,3-bis-O-(geranylgeranyl)-sn-glycerol 1-phospholipid + 8 AH2. The catalysed reaction is 2,3-bis-O-(phytanyl)-sn-glycerol 1-phosphate + 8 A = 2,3-bis-O-(geranylgeranyl)-sn-glycerol 1-phosphate + 8 AH2. It carries out the reaction sn-3-O-phytanylglycerol 1-phosphate + 4 A = sn-3-O-(geranylgeranyl)glycerol 1-phosphate + 4 AH2. It catalyses the reaction phytyl diphosphate + 3 A = (2E,6E,10E)-geranylgeranyl diphosphate + 3 AH2. It participates in membrane lipid metabolism; glycerophospholipid metabolism. Functionally, is involved in the reduction of 2,3-digeranylgeranylglycerophospholipids (unsaturated archaeols) into 2,3-diphytanylglycerophospholipids (saturated archaeols) in the biosynthesis of archaeal membrane lipids. Catalyzes the formation of archaetidic acid (2,3-di-O-phytanyl-sn-glyceryl phosphate) from 2,3-di-O-geranylgeranylglyceryl phosphate (DGGGP) via the hydrogenation of each double bond of the isoprenoid chains. Is not active with NADPH or NADH as an electron donor; the physiological reducing agent is unknown. Is also active on the more upstream precursors of membrane lipid biosynthesis, catalyzing the complete reduction of 3-O-geranylgeranylglyceryl phosphate (GGGP) to 3-O-phytanylglyceryl phosphate, and the partial reduction of geranylgeranyl diphosphate (GGPP) to phytyl diphosphate, thus reducing three of four GGPP double bonds and preserving the allylic double bond (at position 2). This reaction product is a reactive prenyl donor, which can be used as a substrate by archaeal prenyltransferases such as GGGP synthases. The chain is Digeranylgeranylglycerophospholipid reductase from Sulfolobus acidocaldarius (strain ATCC 33909 / DSM 639 / JCM 8929 / NBRC 15157 / NCIMB 11770).